The chain runs to 251 residues: Probable transcriptional regulatory protein Swol_1435 (251 aa).

The tract at residues 1–23 is disordered; sequence MAGHSKWANIKHKKARSDEKRGK.

This sequence belongs to the TACO1 family.

It is found in the cytoplasm. The sequence is that of Probable transcriptional regulatory protein Swol_1435 from Syntrophomonas wolfei subsp. wolfei (strain DSM 2245B / Goettingen).